The primary structure comprises 122 residues: S-adenosylmethionine decarboxylase proenzyme (122 aa).

The active-site Schiff-base intermediate with substrate; via pyruvic acid is Ser63. Ser63 is subject to Pyruvic acid (Ser); by autocatalysis. His68 functions as the Proton acceptor; for processing activity in the catalytic mechanism. Cys83 functions as the Proton donor; for catalytic activity in the catalytic mechanism.

This sequence belongs to the prokaryotic AdoMetDC family. Type 1 subfamily. In terms of assembly, heterotetramer of two alpha and two beta chains arranged as a dimer of alpha/beta heterodimers. Pyruvate is required as a cofactor. Post-translationally, is synthesized initially as an inactive proenzyme. Formation of the active enzyme involves a self-maturation process in which the active site pyruvoyl group is generated from an internal serine residue via an autocatalytic post-translational modification. Two non-identical subunits are generated from the proenzyme in this reaction, and the pyruvate is formed at the N-terminus of the alpha chain, which is derived from the carboxyl end of the proenzyme. The post-translation cleavage follows an unusual pathway, termed non-hydrolytic serinolysis, in which the side chain hydroxyl group of the serine supplies its oxygen atom to form the C-terminus of the beta chain, while the remainder of the serine residue undergoes an oxidative deamination to produce ammonia and the pyruvoyl group blocking the N-terminus of the alpha chain.

It carries out the reaction S-adenosyl-L-methionine + H(+) = S-adenosyl 3-(methylsulfanyl)propylamine + CO2. The protein operates within amine and polyamine biosynthesis; S-adenosylmethioninamine biosynthesis; S-adenosylmethioninamine from S-adenosyl-L-methionine: step 1/1. In terms of biological role, catalyzes the decarboxylation of S-adenosylmethionine to S-adenosylmethioninamine (dcAdoMet), the propylamine donor required for the synthesis of the polyamines spermine and spermidine from the diamine putrescine. This is S-adenosylmethionine decarboxylase proenzyme from Methanococcus maripaludis (strain C5 / ATCC BAA-1333).